Consider the following 507-residue polypeptide: ATP synthase subunit alpha, chloroplastic (507 aa).

170–177 (GDRQTGKT) is an ATP binding site.

This sequence belongs to the ATPase alpha/beta chains family. In terms of assembly, F-type ATPases have 2 components, CF(1) - the catalytic core - and CF(0) - the membrane proton channel. CF(1) has five subunits: alpha(3), beta(3), gamma(1), delta(1), epsilon(1). CF(0) has four main subunits: a, b, b' and c.

The protein localises to the plastid. It is found in the chloroplast thylakoid membrane. The catalysed reaction is ATP + H2O + 4 H(+)(in) = ADP + phosphate + 5 H(+)(out). Produces ATP from ADP in the presence of a proton gradient across the membrane. The alpha chain is a regulatory subunit. The chain is ATP synthase subunit alpha, chloroplastic from Physcomitrium patens (Spreading-leaved earth moss).